A 239-amino-acid chain; its full sequence is MVQHLTAEEIIQYISDAKKSTPIKVYLNGNFEGITYPESFKVFGSEQSKVIFCEADDWKPFYETYGSQFEDIEIEMDRRNSAIPLKDLTNTNARIEPGAFIREQAIIEDGAVVMMGATINIGAVVGEGTMIDMNATLGGRATTGKNVHVGAGAVLAGVIEPPSASPVIIEDDVLIGANAVILEGVRVGKGAIVAAGAIVTQDVPAGTVVAGTPAKVIKQASEVQDTKKEIVAALRKLND.

This sequence belongs to the transferase hexapeptide repeat family. DapH subfamily.

The catalysed reaction is (S)-2,3,4,5-tetrahydrodipicolinate + acetyl-CoA + H2O = L-2-acetamido-6-oxoheptanedioate + CoA. It functions in the pathway amino-acid biosynthesis; L-lysine biosynthesis via DAP pathway; LL-2,6-diaminopimelate from (S)-tetrahydrodipicolinate (acetylase route): step 1/3. Catalyzes the transfer of an acetyl group from acetyl-CoA to tetrahydrodipicolinate. This chain is 2,3,4,5-tetrahydropyridine-2,6-dicarboxylate N-acetyltransferase, found in Staphylococcus aureus (strain bovine RF122 / ET3-1).